Here is a 181-residue protein sequence, read N- to C-terminus: TATA-box-binding protein (181 aa).

2 repeat units span residues 7–83 and 98–173.

It belongs to the TBP family.

Functionally, general factor that plays a role in the activation of archaeal genes transcribed by RNA polymerase. Binds specifically to the TATA box promoter element which lies close to the position of transcription initiation. The polypeptide is TATA-box-binding protein (Methanococcus maripaludis (strain C6 / ATCC BAA-1332)).